We begin with the raw amino-acid sequence, 89 residues long: Large ribosomal subunit protein bL27 (89 aa).

The segment at 1 to 22 is disordered; sequence MAHKKGTGSTRNGRDSNAQRLG. Residues 7–19 show a composition bias toward polar residues; the sequence is TGSTRNGRDSNAQ.

The protein belongs to the bacterial ribosomal protein bL27 family.

The polypeptide is Large ribosomal subunit protein bL27 (Cyanothece sp. (strain PCC 7425 / ATCC 29141)).